The sequence spans 420 residues: Vasopressin V1a receptor (420 aa).

The interval 1–45 (MSFPRGSYDPAASNSSPRWPLSAEDANSSREAAGHQKGSDPSGDV) is disordered. Residues 1–54 (MSFPRGSYDPAASNSSPRWPLSAEDANSSREAAGHQKGSDPSGDVRNEELAKLE) are Extracellular-facing. Asn27 is a glycosylation site (N-linked (GlcNAc...) asparagine). Residues 32 to 45 (AAGHQKGSDPSGDV) show a composition bias toward basic and acidic residues. A helical transmembrane segment spans residues 55-75 (IAVLAVIFVVAVLGNSSVLLA). At 76-92 (LHRTPRKTSRMHLFIRH) the chain is on the cytoplasmic side. A helical transmembrane segment spans residues 93–113 (LSLADLAVAFFQVLPQLCWDI). At 114–125 (TYRFRGPDWLCR) the chain is on the extracellular side. Cys124 and Cys205 are oxidised to a cystine. The chain crosses the membrane as a helical span at residues 126–146 (VVKHLQVFAMFASAYMLVVMT). The Cytoplasmic segment spans residues 147 to 168 (ADRYIAVCHPLKTLQQPARRSR). Residues 169–189 (LMIAASWVLSFLLSTPQYFIF) traverse the membrane as a helical segment. Residues 190 to 225 (SMIEIEVNNGTKTQDCWATFIQPWGTRAYVTWMTSG) are Extracellular-facing. An N-linked (GlcNAc...) asparagine glycan is attached at Asn198. A helical transmembrane segment spans residues 226-246 (VFVVPVVILGTCYGFICYHIW). The Cytoplasmic segment spans residues 247-294 (RNVRGKTASRQSKGSGEDVAPFHKGLLVTPCVSSVKTISRAKIRTVKM). The helical transmembrane segment at 295 to 315 (TFVIVTAYILCWAPFFIVQMW) threads the bilayer. The Extracellular segment spans residues 316-331 (SVWDDNFIWTDSENPS). Residues 332 to 352 (ITITALLASLNSCCNPWIYMF) form a helical membrane-spanning segment. Topologically, residues 353–420 (FSGHLLQDCV…RSIRFIPVST (68 aa)) are cytoplasmic. 2 S-palmitoyl cysteine lipidation sites follow: Cys367 and Cys368. The tract at residues 379–411 (DSDNMSRRQTSYSNNRSPTNSTGTWKDSPKSSR) is disordered. A compositionally biased stretch (polar residues) spans 385 to 403 (RRQTSYSNNRSPTNSTGTW). Ser406 carries the phosphoserine modification.

The protein belongs to the G-protein coupled receptor 1 family. Vasopressin/oxytocin receptor subfamily.

The protein resides in the cell membrane. Functionally, receptor for arginine vasopressin. The activity of this receptor is mediated by G proteins which activate a phosphatidyl-inositol-calcium second messenger system. Involved in social memory formation. This chain is Vasopressin V1a receptor (Avpr1a), found in Microtus montanus (Montane vole).